A 353-amino-acid polypeptide reads, in one-letter code: Photosystem II protein D1 (353 aa).

T2 carries the N-acetylthreonine modification. A Phosphothreonine modification is found at T2. 3 helical membrane passes run 29 to 46, 118 to 133, and 142 to 156; these read YIGWFGVLMIPTLLTATS, HFLLGVACYMGREWEL, and WIAVAYSAPVAAATA. H118 is a binding site for chlorophyll a. Y126 lines the pheophytin a pocket. [CaMn4O5] cluster is bound by residues D170 and E189. Residues 197–218 traverse the membrane as a helical segment; sequence FHMLGVAGVFGGSLFSAMHGSL. Chlorophyll a is bound at residue H198. Residues H215 and 264-265 contribute to the a quinone site; that span reads SF. H215 is a Fe cation binding site. Residue H272 coordinates Fe cation. Residues 274–288 traverse the membrane as a helical segment; the sequence is FLAAWPVVGIWFTAL. The [CaMn4O5] cluster site is built by H332, E333, D342, and A344. Positions 345 to 353 are excised as a propeptide; the sequence is SVEAPSINA.

This sequence belongs to the reaction center PufL/M/PsbA/D family. PSII is composed of 1 copy each of membrane proteins PsbA, PsbB, PsbC, PsbD, PsbE, PsbF, PsbH, PsbI, PsbJ, PsbK, PsbL, PsbM, PsbT, PsbX, PsbY, PsbZ, Psb30/Ycf12, at least 3 peripheral proteins of the oxygen-evolving complex and a large number of cofactors. It forms dimeric complexes. The D1/D2 heterodimer binds P680, chlorophylls that are the primary electron donor of PSII, and subsequent electron acceptors. It shares a non-heme iron and each subunit binds pheophytin, quinone, additional chlorophylls, carotenoids and lipids. D1 provides most of the ligands for the Mn4-Ca-O5 cluster of the oxygen-evolving complex (OEC). There is also a Cl(-1) ion associated with D1 and D2, which is required for oxygen evolution. The PSII complex binds additional chlorophylls, carotenoids and specific lipids. is required as a cofactor. Post-translationally, tyr-161 forms a radical intermediate that is referred to as redox-active TyrZ, YZ or Y-Z. In terms of processing, C-terminally processed by CTPA; processing is essential to allow assembly of the oxygen-evolving complex and thus photosynthetic growth.

The protein resides in the plastid. Its subcellular location is the chloroplast thylakoid membrane. It carries out the reaction 2 a plastoquinone + 4 hnu + 2 H2O = 2 a plastoquinol + O2. Functionally, photosystem II (PSII) is a light-driven water:plastoquinone oxidoreductase that uses light energy to abstract electrons from H(2)O, generating O(2) and a proton gradient subsequently used for ATP formation. It consists of a core antenna complex that captures photons, and an electron transfer chain that converts photonic excitation into a charge separation. The D1/D2 (PsbA/PsbD) reaction center heterodimer binds P680, the primary electron donor of PSII as well as several subsequent electron acceptors. This Chara vulgaris (Common stonewort) protein is Photosystem II protein D1.